The chain runs to 405 residues: Transposase from transposon Tn1545 (405 aa).

A Core-binding (CB) domain is found at 79-163 (GKKMTLCQLY…SLKASFYIAI (85 aa)). Residues 186–392 (VPKTVLTEEQ…TFDSAMAEMK (207 aa)) enclose the Tyr recombinase domain. Active-site residues include Arg225, Lys264, His343, Arg346, and His369. The active-site O-(3'-phospho-DNA)-tyrosine intermediate is the Tyr379.

It belongs to the 'phage' integrase family.

This Streptococcus agalactiae serotype V (strain ATCC BAA-611 / 2603 V/R) protein is Transposase from transposon Tn1545 (int).